We begin with the raw amino-acid sequence, 301 residues long: Putative glycosyltransferase MJ1113 (301 aa).

The next 8 helical transmembrane spans lie at 2 to 22 (GHYFINLFTYTIIAFIFSAVL), 62 to 82 (FIPFVNPIFVLPIITAGIIGI), 95 to 115 (LILLFISGLIIGILFYNNSYV), 117 to 137 (LIEILIIALGIMISSNLTNML), 140 to 160 (FNGLEIGMGVIASISLALVLF), 164 to 184 (YTTGFLSALIFSASYLGLLIF), 191 to 211 (VFPGDVGTLPIGAFLAVLAVV), and 280 to 300 (VTVLWIIGIFFGIVGILISLI).

The protein belongs to the glycosyltransferase 4 family.

The protein resides in the cell membrane. This Methanocaldococcus jannaschii (strain ATCC 43067 / DSM 2661 / JAL-1 / JCM 10045 / NBRC 100440) (Methanococcus jannaschii) protein is Putative glycosyltransferase MJ1113.